A 181-amino-acid polypeptide reads, in one-letter code: Large ribosomal subunit protein uL5c (181 aa).

Belongs to the universal ribosomal protein uL5 family. Part of the 50S ribosomal subunit; contacts the 5S rRNA.

It localises to the plastid. It is found in the chloroplast. In terms of biological role, binds 5S rRNA, forms part of the central protuberance of the 50S subunit. The sequence is that of Large ribosomal subunit protein uL5c (rpl5) from Porphyra purpurea (Red seaweed).